We begin with the raw amino-acid sequence, 461 residues long: Cysteine--tRNA ligase (461 aa).

Cys-30 is a binding site for Zn(2+). The short motif at 32 to 42 (VTVYDLCHIGH) is the 'HIGH' region element. Zn(2+) is bound by residues Cys-211, His-236, and Glu-240. The 'KMSKS' region motif lies at 268-272 (KMSKS). Lys-271 lines the ATP pocket.

The protein belongs to the class-I aminoacyl-tRNA synthetase family. Monomer. Zn(2+) serves as cofactor.

It localises to the cytoplasm. The enzyme catalyses tRNA(Cys) + L-cysteine + ATP = L-cysteinyl-tRNA(Cys) + AMP + diphosphate. This is Cysteine--tRNA ligase from Shewanella sp. (strain ANA-3).